Here is a 414-residue protein sequence, read N- to C-terminus: GLABROUS1 enhancer-binding protein-like 3 (414 aa).

2 disordered regions span residues 36–57 (QLRT…LSSS) and 167–191 (QAKD…DRDV). The segment covering 38-50 (RTTTTRTTTTRTT) has biased composition (low complexity). Positions 382-403 (LINEWKALFVDEQRLCVKKLTF) are non-canonical leucine-zipper.

This sequence belongs to the GeBP family. Homo- and heterodimers. Interacts with GEBP, GPL1 and GPL2. Interacts with GEBP. In terms of tissue distribution, expressed in the apical meristem and young leaf primordia. Detected in the vascular tissues of rosette leaves, in primary and secondary roots and at the base of flowers and siliques.

The protein localises to the nucleus. Functionally, probable transcription factor. Involved in stress responses. Plays a repressive role in cell expansion by counteracting the positive role of CPR5 in this process, but does not regulate cell proliferation or endoreduplication. In Arabidopsis thaliana (Mouse-ear cress), this protein is GLABROUS1 enhancer-binding protein-like 3.